The primary structure comprises 269 residues: Phosphonoacetaldehyde hydrolase (269 aa).

Asp10 acts as the Nucleophile in catalysis. 2 residues coordinate Mg(2+): Asp10 and Ala12. Lys52 functions as the Schiff-base intermediate with substrate in the catalytic mechanism. Mg(2+) is bound at residue Asp186.

Belongs to the HAD-like hydrolase superfamily. PhnX family. As to quaternary structure, homodimer. The cofactor is Mg(2+).

The catalysed reaction is phosphonoacetaldehyde + H2O = acetaldehyde + phosphate + H(+). Functionally, involved in phosphonate degradation. This is Phosphonoacetaldehyde hydrolase from Salmonella typhi.